Here is a 342-residue protein sequence, read N- to C-terminus: Ribosomal RNA small subunit methyltransferase H (342 aa).

S-adenosyl-L-methionine is bound by residues 36–38, aspartate 56, phenylalanine 82, aspartate 100, and glutamine 107; that span reads GGH. Positions 309–342 are disordered; sequence ENRESGMGKGHGAAASRFPTPDSRFPTSPNGDAP. Positions 333–342 are enriched in polar residues; that stretch reads FPTSPNGDAP.

The protein belongs to the methyltransferase superfamily. RsmH family.

Its subcellular location is the cytoplasm. It carries out the reaction cytidine(1402) in 16S rRNA + S-adenosyl-L-methionine = N(4)-methylcytidine(1402) in 16S rRNA + S-adenosyl-L-homocysteine + H(+). In terms of biological role, specifically methylates the N4 position of cytidine in position 1402 (C1402) of 16S rRNA. In Xanthomonas campestris pv. campestris (strain 8004), this protein is Ribosomal RNA small subunit methyltransferase H.